The following is an 861-amino-acid chain: Probable linoleate 9S-lipoxygenase 8 (861 aa).

Residues 33-160 enclose the PLAT domain; sequence FTDLASSLTG…NYKSDRIFFA (128 aa). The 699-residue stretch at 163–861 folds into the Lipoxygenase domain; sequence PYLPSETPEL…GKGIPNSVSI (699 aa). Residues 220 to 245 form a disordered region; that stretch reads TLGGSAEYPYPRRGRTGRPPTRTDPK. Positions 522, 527, 713, 717, and 861 each coordinate Fe cation.

This sequence belongs to the lipoxygenase family. In terms of assembly, monomer. Fe cation is required as a cofactor.

It is found in the cytoplasm. It catalyses the reaction (9Z,12Z)-octadecadienoate + O2 = (9S)-hydroperoxy-(10E,12Z)-octadecadienoate. Its pathway is lipid metabolism; oxylipin biosynthesis. Functionally, plant lipoxygenases may be involved in a number of diverse aspects of plant physiology including growth and development, pest resistance, and senescence or responses to wounding. Catalyzes the hydroperoxidation of lipids containing a cis,cis-1,4-pentadiene structure. In Solanum tuberosum (Potato), this protein is Probable linoleate 9S-lipoxygenase 8 (LOX1.8).